The following is a 229-amino-acid chain: DNA mismatch repair protein MutH (229 aa).

Belongs to the MutH family.

It is found in the cytoplasm. Sequence-specific endonuclease that cleaves unmethylated GATC sequences. It is involved in DNA mismatch repair. The polypeptide is DNA mismatch repair protein MutH (Escherichia coli O127:H6 (strain E2348/69 / EPEC)).